Reading from the N-terminus, the 516-residue chain is Endoglucanase 17 (516 aa).

The signal sequence occupies residues 1–29 (MALLLVSSSSSYALRVTIFLSFFFFLCNG). Asp-105 (nucleophile) is an active-site residue. Active-site residues include His-433, Asp-484, and Glu-493.

The protein belongs to the glycosyl hydrolase 9 (cellulase E) family.

The protein resides in the secreted. The catalysed reaction is Endohydrolysis of (1-&gt;4)-beta-D-glucosidic linkages in cellulose, lichenin and cereal beta-D-glucans.. The polypeptide is Endoglucanase 17 (Arabidopsis thaliana (Mouse-ear cress)).